The following is a 77-amino-acid chain: Chaplin-H (77 aa).

The N-terminal stretch at 1–25 is a signal peptide; it reads MLKKVVAAAAATGGLVLAGAGMAVA. The Chaplin domain maps to 36–76; it reads SPGVLSGNVVQVPVHVPVNVCGNTISVIGLLNPAFGNVCIN. 2 forms amyloid fibrils in vitro regions span residues 38–54 and 57–72; these read GVLSGNVVQVPVHVPVN and GNTISVIGLLNPAFGN. Cys56 and Cys74 are joined by a disulfide.

It belongs to the chaplin family. Short chaplin subfamily. In terms of assembly, homodimer; disulfide linked. About 10% of ChpH isolated from cell wall forms disulfide-bonded homodimers.

Its subcellular location is the cell surface. It is found in the secreted. The protein resides in the cell wall. The protein localises to the fimbrium. Its function is as follows. One of 8 partially redundant surface-active proteins required for efficient formation of aerial mycelium; the short chaplins assemble into a hydrophobic, amyloidal fibrillar surface layer that envelopes and protects aerial hyphae and spores, presumably anchored to the long chaplins. Chaplins have an overlapping function with the surface-active SapB peptide; chaplins are essential on minimal medium while on rich medium both chaplins and SapB are required for efficient aerial hyphae formation. Chaplins are also involved in cell attachment to a hydrophobic surface. Forms amyloid fibrils in vitro probably composed of stacked beta-sheets. A small chaplin extract (ChpD, ChpE, ChpF, ChpG and ChpH) self-assembles into 2 different amyloids; small fibrils at the air-water interface form an amphipathic membrane that resembles spore-surface structures involved in aerial hyphae formation, and hydrophilic fibrils in solution that resemble the fibers that attach cells to a hydrophobic surface. At the air-water interface the hydrophilic surface is in contact with water (probably equivalent to the peptidoglycan layer), while the hydrophobic face is exposed to the air, making the surface of the aerial hyphae hydrophobic. A minimal chaplin strain capable of forming aerial mycelium/hyphae on minimal medium contains ChpC, ChpE and ChpH. The strain also has restored rodlet formation on the hyphae surface. A small chaplin extract applied to a chaplin-deficient strain restores aerial hyphae formation. The small chaplin extract forms an amyloid-like structure similar to that seen on the surface of cells without rodlets (rdlA-rdlB deletions), and is highly surface active, reducing surface tension from 72 to 26 mJ/m(2), which probably allows escape of hyphae from an aqueous environment into air. The chain is Chaplin-H from Streptomyces coelicolor (strain ATCC BAA-471 / A3(2) / M145).